The chain runs to 563 residues: Cytidine monophosphate-N-acetylneuraminic acid hydroxylase (563 aa).

Residues 10–108 (LSPAETANLK…VEMDGNDGLF (99 aa)) enclose the Rieske domain. Positions 50, 52, 71, and 74 each coordinate [2Fe-2S] cluster.

Belongs to the CMP-Neu5Ac hydroxylase family. [2Fe-2S] cluster serves as cofactor.

It localises to the cytoplasm. The enzyme catalyses CMP-N-acetyl-beta-neuraminate + 2 Fe(II)-[cytochrome b5] + O2 + 2 H(+) = CMP-N-glycoloyl-beta-neuraminate + 2 Fe(III)-[cytochrome b5] + H2O. It participates in amino-sugar metabolism; N-acetylneuraminate metabolism. In terms of biological role, sialic acids are components of carbohydrate chains of glycoconjugates and are involved in cell-cell recognition and cell-pathogen interactions. Catalyzes the conversion of CMP-N-acetylneuraminic acid (CMP-Neu5Ac) into its hydroxylated derivative CMP-N-glycolylneuraminic acid (CMP-Neu5Gc), a sialic acid abundantly expressed at the surface of many cells. The chain is Cytidine monophosphate-N-acetylneuraminic acid hydroxylase (CMAH) from Cricetulus griseus (Chinese hamster).